The primary structure comprises 172 residues: Small ribosomal subunit protein uS5 (172 aa).

Positions leucine 15–isoleucine 78 constitute an S5 DRBM domain.

Belongs to the universal ribosomal protein uS5 family. As to quaternary structure, part of the 30S ribosomal subunit. Contacts proteins S4 and S8.

In terms of biological role, with S4 and S12 plays an important role in translational accuracy. Functionally, located at the back of the 30S subunit body where it stabilizes the conformation of the head with respect to the body. This Dehalococcoides mccartyi (strain CBDB1) protein is Small ribosomal subunit protein uS5.